The following is a 400-amino-acid chain: Protein transport protein HofC homolog (400 aa).

Helical transmembrane passes span 165 to 185 (YPII…HFVL), 209 to 229 (LADF…LLAI), and 370 to 390 (LLII…LPIF).

The protein belongs to the GSP F family.

The protein localises to the cell inner membrane. The protein is Protein transport protein HofC homolog (hofC) of Escherichia coli (strain K12).